The chain runs to 184 residues: GTP cyclohydrolase 1 (184 aa).

3 residues coordinate Zn(2+): Cys-75, His-78, and Cys-146.

Belongs to the GTP cyclohydrolase I family. In terms of assembly, homomer.

It carries out the reaction GTP + H2O = 7,8-dihydroneopterin 3'-triphosphate + formate + H(+). Its pathway is cofactor biosynthesis; 7,8-dihydroneopterin triphosphate biosynthesis; 7,8-dihydroneopterin triphosphate from GTP: step 1/1. This is GTP cyclohydrolase 1 from Streptococcus pneumoniae (strain Hungary19A-6).